Reading from the N-terminus, the 213-residue chain is 3-demethoxyubiquinol 3-hydroxylase (213 aa).

Residues E62, E92, H95, E144, E176, and H179 each coordinate Fe cation.

The protein belongs to the COQ7 family. Requires Fe cation as cofactor.

It localises to the cell membrane. The enzyme catalyses a 5-methoxy-2-methyl-3-(all-trans-polyprenyl)benzene-1,4-diol + AH2 + O2 = a 3-demethylubiquinol + A + H2O. The protein operates within cofactor biosynthesis; ubiquinone biosynthesis. Catalyzes the hydroxylation of 2-nonaprenyl-3-methyl-6-methoxy-1,4-benzoquinol during ubiquinone biosynthesis. The sequence is that of 3-demethoxyubiquinol 3-hydroxylase from Legionella pneumophila (strain Corby).